Here is a 684-residue protein sequence, read N- to C-terminus: Glycine--tRNA ligase beta subunit (684 aa).

This sequence belongs to the class-II aminoacyl-tRNA synthetase family. As to quaternary structure, tetramer of two alpha and two beta subunits.

It is found in the cytoplasm. The catalysed reaction is tRNA(Gly) + glycine + ATP = glycyl-tRNA(Gly) + AMP + diphosphate. The protein is Glycine--tRNA ligase beta subunit of Pseudomonas aeruginosa (strain UCBPP-PA14).